The primary structure comprises 313 residues: MSLPKLHVAVLMGGWSSERPVSLMSGEGVAKALESKGHQVTRIDMDRDVALRLAEAKPDVVFNALHGTPGEDGSIQGLMDIMGLTYTHSGLVTSVIAIDKELTKQALVPHGIPMPGGRMVKTADLYKADPLPRPYVLKPVNEGSSVGVAIVTAEGNYGSPISAASKGPWQEFDQLLAEPFIRGRELTTAVIGDRALLVTELRPKSGFYDFDAKYTEGMTDHICPAEIPDEITEACKDIALRAHRLLGCKGTSRSDFRWDDEQGVEGLFLLEVNTQPGMTPLSLVPEQARALGMDYSDLVEAIIAEALKDAGKA.

Residues Lys-104–Ala-304 enclose the ATP-grasp domain. Residue Pro-130–Thr-187 coordinates ATP. Positions 255, 271, and 273 each coordinate Mg(2+).

This sequence belongs to the D-alanine--D-alanine ligase family. Mg(2+) is required as a cofactor. It depends on Mn(2+) as a cofactor.

The protein resides in the cytoplasm. It carries out the reaction 2 D-alanine + ATP = D-alanyl-D-alanine + ADP + phosphate + H(+). Its pathway is cell wall biogenesis; peptidoglycan biosynthesis. Cell wall formation. The chain is D-alanine--D-alanine ligase from Novosphingobium aromaticivorans (strain ATCC 700278 / DSM 12444 / CCUG 56034 / CIP 105152 / NBRC 16084 / F199).